The following is a 37-amino-acid chain: GKLSGISKVLRAIAKFFKGVGKARKQFKEASDLDKNQ.

In terms of tissue distribution, expressed by the venom gland.

It localises to the secreted. Its function is as follows. Disrupts biological membranes, particularly those rich in phosphocholine. Has antimicrobial activity against Gram-negative bacterium E.coli, Gram-positive bacteria B.subtilis and S.aureus, and hemolytic activity against sheep, pig and guinea pig red blood cells. Has insecticidal activity against S.frugiperda ovarian cells by opening non-selective ion channels. Enhances the insecticidal activity of spider venom neurotoxic peptides. The sequence is that of M-oxotoxin-Ot2c from Oxyopes takobius (Lynx spider).